We begin with the raw amino-acid sequence, 80 residues long: Toxin Acra1 (80 aa).

An N-terminal signal peptide occupies residues 1-22; the sequence is MMKLVLFSIIVILFSLIGSIHG. In terms of domain architecture, LCN-type CS-alpha/beta spans 25 to 80; the sequence is VPGNYPLDSSGNKYPCTVLGDNQSCIDVCKKHGVKYGYCYSFKCWCEFLEDKNVSI. 3 disulfides stabilise this stretch: Cys40–Cys63, Cys49–Cys68, and Cys53–Cys70.

Expressed by the venom gland.

The protein resides in the secreted. Its function is as follows. Probable neurotoxin that inhibits ion channels. Is toxic to mice. Is about 2.8% of the total protein in the venom. The polypeptide is Toxin Acra1 (Androctonus crassicauda (Arabian fat-tailed scorpion)).